A 212-amino-acid chain; its full sequence is Pyridoxine/pyridoxamine 5'-phosphate oxidase (212 aa).

Substrate-binding positions include 8-11 (RREY) and lysine 66. Residues 61–66 (RIVLLK), 76–77 (FT), arginine 82, lysine 83, and glutamine 105 each bind FMN. Tyrosine 123, arginine 127, and serine 131 together coordinate substrate. FMN contacts are provided by residues 140–141 (QS) and tryptophan 185. 191–193 (RLH) lines the substrate pocket. Residue arginine 195 participates in FMN binding.

Belongs to the pyridoxamine 5'-phosphate oxidase family. As to quaternary structure, homodimer. FMN serves as cofactor.

It catalyses the reaction pyridoxamine 5'-phosphate + O2 + H2O = pyridoxal 5'-phosphate + H2O2 + NH4(+). The catalysed reaction is pyridoxine 5'-phosphate + O2 = pyridoxal 5'-phosphate + H2O2. Its pathway is cofactor metabolism; pyridoxal 5'-phosphate salvage; pyridoxal 5'-phosphate from pyridoxamine 5'-phosphate: step 1/1. It participates in cofactor metabolism; pyridoxal 5'-phosphate salvage; pyridoxal 5'-phosphate from pyridoxine 5'-phosphate: step 1/1. Catalyzes the oxidation of either pyridoxine 5'-phosphate (PNP) or pyridoxamine 5'-phosphate (PMP) into pyridoxal 5'-phosphate (PLP). This Shewanella oneidensis (strain ATCC 700550 / JCM 31522 / CIP 106686 / LMG 19005 / NCIMB 14063 / MR-1) protein is Pyridoxine/pyridoxamine 5'-phosphate oxidase.